We begin with the raw amino-acid sequence, 376 residues long: Probable low-specificity L-threonine aldolase (376 aa).

The segment covering 1–21 (MSGSVTSTTTETRLCPSNQGS) has biased composition (polar residues). Positions 1–22 (MSGSVTSTTTETRLCPSNQGSA) are disordered. N6-(pyridoxal phosphate)lysine is present on Lys-226.

The protein belongs to the threonine aldolase family. In terms of assembly, homotetramer. Requires pyridoxal 5'-phosphate as cofactor.

The catalysed reaction is L-threonine = acetaldehyde + glycine. It catalyses the reaction L-allo-threonine = acetaldehyde + glycine. Its pathway is amino-acid degradation; L-threonine degradation via aldolase pathway; acetaldehyde and glycine from L-threonine: step 1/1. This is Probable low-specificity L-threonine aldolase (gly1) from Schizosaccharomyces pombe (strain 972 / ATCC 24843) (Fission yeast).